A 210-amino-acid chain; its full sequence is Probable nicotinate-nucleotide adenylyltransferase (210 aa).

It belongs to the NadD family.

It catalyses the reaction nicotinate beta-D-ribonucleotide + ATP + H(+) = deamido-NAD(+) + diphosphate. The protein operates within cofactor biosynthesis; NAD(+) biosynthesis; deamido-NAD(+) from nicotinate D-ribonucleotide: step 1/1. In terms of biological role, catalyzes the reversible adenylation of nicotinate mononucleotide (NaMN) to nicotinic acid adenine dinucleotide (NaAD). This chain is Probable nicotinate-nucleotide adenylyltransferase, found in Streptococcus pyogenes serotype M6 (strain ATCC BAA-946 / MGAS10394).